We begin with the raw amino-acid sequence, 440 residues long: Probable exopolygalacturonase C (440 aa).

Positions 1-21 (MLITNPALLGILASLAPLALG) are cleaved as a signal peptide. N-linked (GlcNAc...) asparagine glycosylation is found at Asn24, Asn84, Asn151, and Asn219. PbH1 repeat units follow at residues 217–238 (GTNISITDSVMYNGDDAIAVNT) and 240–261 (SHNIVFARNTIGYQSHGMSIGS). Asp231 serves as the catalytic Proton donor. His255 is an active-site residue. Asn271 is a glycosylation site (N-linked (GlcNAc...) asparagine). The PbH1 3 repeat unit spans residues 272 to 293 (ITNLRFEDVTVIDALYAARFKS). 2 N-linked (GlcNAc...) asparagine glycosylation sites follow: Asn313 and Asn350. The cysteines at positions 389 and 395 are disulfide-linked. N-linked (GlcNAc...) asparagine glycosylation is present at Asn434.

Belongs to the glycosyl hydrolase 28 family.

The protein resides in the secreted. The catalysed reaction is [(1-&gt;4)-alpha-D-galacturonosyl](n) + H2O = alpha-D-galacturonate + [(1-&gt;4)-alpha-D-galacturonosyl](n-1). Its function is as follows. Specific in hydrolyzing the terminal glycosidic bond of polygalacturonic acid and oligogalacturonates. The chain is Probable exopolygalacturonase C (pgxC) from Neosartorya fischeri (strain ATCC 1020 / DSM 3700 / CBS 544.65 / FGSC A1164 / JCM 1740 / NRRL 181 / WB 181) (Aspergillus fischerianus).